The chain runs to 205 residues: Inactive ribonuclease-like protein 9 (205 aa).

The first 26 residues, 1–26 (MMRTLITIHPLPLLLLLQQLLQPVQF), serve as a signal peptide directing secretion. 3 disulfides stabilise this stretch: cysteine 98-cysteine 153, cysteine 116-cysteine 168, and cysteine 123-cysteine 130. 2 N-linked (GlcNAc...) asparagine glycosylation sites follow: asparagine 131 and asparagine 143.

This sequence belongs to the pancreatic ribonuclease family.

The protein localises to the secreted. Functionally, does not exhibit any ribonuclease activity. In Gorilla gorilla gorilla (Western lowland gorilla), this protein is Inactive ribonuclease-like protein 9 (RNASE9).